Here is a 604-residue protein sequence, read N- to C-terminus: Choline transporter-like protein 3 (604 aa).

N90 and N103 each carry an N-linked (GlcNAc...) asparagine glycan. 5 consecutive transmembrane segments (helical) span residues 165–185 (DTIL…LFTF), 195–215 (IIIS…WWLY), 237–257 (LAFA…IFTL), 286–306 (LWTF…LLSL), and 330–350 (YLWW…LTCQ). Residues N454 and N472 are each glycosylated (N-linked (GlcNAc...) asparagine). 2 helical membrane-spanning segments follow: residues 485 to 505 (FIIF…GLMA) and 514 to 534 (VWAI…HSFL). Residues 581-592 (NARSQGHKNSLP) are compositionally biased toward polar residues. A disordered region spans residues 581 to 604 (NARSQGHKNSLPNEEGTELRPIVR).

The protein belongs to the CTL (choline transporter-like) family. In terms of tissue distribution, expressed in colon, kidney and ileum.

It is found in the membrane. In Rattus norvegicus (Rat), this protein is Choline transporter-like protein 3 (Slc44a3).